Reading from the N-terminus, the 21-residue chain is Dahlein-5.4 (21 aa).

Expressed by the skin dorsal glands.

The protein resides in the secreted. In terms of biological role, has no antimicrobial activity. Strongly inhibits the formation of NO by neuronal nitric oxide synthase at micromolar concentrations. The protein is Dahlein-5.4 of Ranoidea dahlii (Dahl's aquatic frog).